The primary structure comprises 537 residues: DNA-directed primase/polymerase protein (537 aa).

Residues 1–22 (MLRKWEARVKQIEERASHYERK) adopt a coiled-coil conformation. Substrate is bound by residues arginine 76, 114-116 (DLE), 165-169 (KFSRH), 270-273 (RNFR), and lysine 279. The Mn(2+) site is built by aspartate 114 and glutamate 116. Zn(2+) is bound by residues cysteine 401, histidine 408, cysteine 428, and cysteine 433. Positions 401–434 (CENIGRAHKSNNIMILVDLKNEVWYQKCHDPVCK) match the Zinc knuckle motif motif. The disordered stretch occupies residues 462-481 (SGETDDTSTSLTKDSQTPPS). The interval 462-536 (SGETDDTSTS…DELIIEALQN (75 aa)) is interaction with RPA1. The segment covering 468-478 (TSTSLTKDSQT) has biased composition (low complexity). 2 consecutive short sequence motifs (RPA1-binding motif) follow at residues 494–507 (WDDEDDALFLEATE) and 524–532 (DIPDELIIE).

This sequence belongs to the eukaryotic-type primase small subunit family. Interacts with RPA1; leading to recruitment to chromatin and stimulate DNA primase activity. Interacts with SSBP1. Interacts with POLDIP2; leading to enhance DNA polymerase activity. Mn(2+) serves as cofactor.

The protein resides in the nucleus. Its subcellular location is the mitochondrion matrix. It localises to the chromosome. The catalysed reaction is ssDNA + n NTP = ssDNA/pppN(pN)n-1 hybrid + (n-1) diphosphate.. It carries out the reaction DNA(n) + a 2'-deoxyribonucleoside 5'-triphosphate = DNA(n+1) + diphosphate. Its function is as follows. DNA primase and DNA polymerase required to tolerate replication-stalling lesions by bypassing them. Required to facilitate mitochondrial and nuclear replication fork progression by initiating de novo DNA synthesis using dNTPs and acting as an error-prone DNA polymerase able to bypass certain DNA lesions. Shows a high capacity to tolerate DNA damage lesions such as 8oxoG and abasic sites in DNA. Provides different translesion synthesis alternatives when DNA replication is stalled: able to synthesize DNA primers downstream of lesions, such as ultraviolet (UV) lesions, R-loops and G-quadruplexes, to allow DNA replication to continue. Can also realign primers ahead of 'unreadable lesions' such as abasic sites and 6-4 photoproduct (6-4 pyrimidine-pyrimidinone), thereby skipping the lesion. Repriming avoids fork degradation while leading to accumulation of internal ssDNA gaps behind the forks. Also able to incorporate nucleotides opposite DNA lesions such as 8oxoG, like a regular translesion synthesis DNA polymerase. Also required for reinitiating stalled forks after UV damage during nuclear DNA replication. Required for mitochondrial DNA (mtDNA) synthesis and replication, by reinitiating synthesis after UV damage or in the presence of chain-terminating nucleotides. Prevents APOBEC family-mediated DNA mutagenesis by repriming downstream of abasic site to prohibit error-prone translesion synthesis. Has non-overlapping function with POLH. In addition to its role in DNA damage response, also required to maintain efficient nuclear and mitochondrial DNA replication in unperturbed cells. The polypeptide is DNA-directed primase/polymerase protein (Mus musculus (Mouse)).